The chain runs to 353 residues: G-protein complex alpha subunit gpaA (353 aa).

The segment at 1 to 25 is disordered; that stretch reads MGCGMSTEDKEGKARNEEIENQLKR. Residues 7-25 show a composition bias toward basic and acidic residues; the sequence is TEDKEGKARNEEIENQLKR. Residues 32-353 enclose the G-alpha domain; the sequence is NEIKMLLLGA…QENLRLCGLI (322 aa). A G1 motif region spans residues 35–48; that stretch reads KMLLLGAGESGKST. A divalent metal cation is bound by residues Ser-47 and Thr-181. The segment at 173–181 is G2 motif; it reads DVLRSRVKT. Residues 196–205 form a G3 motif region; it reads YRMFDVGGQR. The G4 motif stretch occupies residues 265-272; sequence ILFLNKID. A G5 motif region spans residues 323–328; that stretch reads TCATDT.

Belongs to the G-alpha family. G(q) subfamily. As to quaternary structure, g proteins are composed of 3 units; alpha, beta and gamma. The alpha chain contains the guanine nucleotide binding site. Interacts with gprM.

Its function is as follows. G-protein complex alpha subunit that plays a role in conidiation and regulation of the biosynthesis of secondary metabolites such as dihydroxynaphthalene (DHN)-melanin, via interaction with the G protein-coupled receptor gprM. The polypeptide is G-protein complex alpha subunit gpaA (Aspergillus fumigatus (strain CBS 144.89 / FGSC A1163 / CEA10) (Neosartorya fumigata)).